The sequence spans 341 residues: Phenylalanine--tRNA ligase alpha subunit (341 aa).

Glutamate 253 is a binding site for Mg(2+).

The protein belongs to the class-II aminoacyl-tRNA synthetase family. Phe-tRNA synthetase alpha subunit type 1 subfamily. Tetramer of two alpha and two beta subunits. Mg(2+) is required as a cofactor.

It is found in the cytoplasm. It carries out the reaction tRNA(Phe) + L-phenylalanine + ATP = L-phenylalanyl-tRNA(Phe) + AMP + diphosphate + H(+). The protein is Phenylalanine--tRNA ligase alpha subunit of Methylococcus capsulatus (strain ATCC 33009 / NCIMB 11132 / Bath).